The sequence spans 197 residues: Nucleoside triphosphate pyrophosphatase (197 aa).

The active-site Proton acceptor is Asp-72.

It belongs to the Maf family. It depends on a divalent metal cation as a cofactor.

The protein resides in the cytoplasm. It catalyses the reaction a ribonucleoside 5'-triphosphate + H2O = a ribonucleoside 5'-phosphate + diphosphate + H(+). The enzyme catalyses a 2'-deoxyribonucleoside 5'-triphosphate + H2O = a 2'-deoxyribonucleoside 5'-phosphate + diphosphate + H(+). Functionally, nucleoside triphosphate pyrophosphatase. May have a dual role in cell division arrest and in preventing the incorporation of modified nucleotides into cellular nucleic acids. This Corynebacterium glutamicum (strain R) protein is Nucleoside triphosphate pyrophosphatase.